Here is a 1044-residue protein sequence, read N- to C-terminus: Diacylglycerol lipase-alpha (1044 aa).

The Cytoplasmic segment spans residues 1-22 (MPGIVVFRRRWSVGSDDLVLPA). A helical transmembrane segment spans residues 23–43 (IFLFLLHTTWFVILSVVLFGL). The Extracellular segment spans residues 44-60 (VYNPHEACSLNLVDHGR). The chain crosses the membrane as a helical span at residues 61 to 81 (GYLGILLSCMIAEMAIIWLSM). Over 82–101 (RGGILYTEPRDSMQYVLYVR) the chain is Cytoplasmic. The chain crosses the membrane as a helical span at residues 102-122 (LAILVIEFIYAIVGIVWLTQY). The Extracellular portion of the chain corresponds to 123 to 136 (YTSCNDLTAKNVTL). A glycan (N-linked (GlcNAc...) asparagine) is linked at N133. A helical membrane pass occupies residues 137 to 157 (GMVVCNWVVILSVCITVLCVF). Over 158 to 1044 (DPTGRTFVKL…KQDDLVISAR (887 aa)) the chain is Cytoplasmic. Active-site charge relay system residues include S472 and D524. 11 positions are modified to phosphoserine: S728, S730, S733, S744, S784, S786, S808, S810, S835, S849, and S954. The interval 848-905 (LSKHSQDTQPLEAALGSGGVTPERPPSAANDEEEAAGGSEGGGVAPRGELALHNGRLG) is disordered. The tract at residues 1013-1044 (QECLATDKIRTSTPTGHGASPTKQDDLVISAR) is disordered. T1025 is modified (phosphothreonine).

It belongs to the AB hydrolase superfamily. Lipase family. As to quaternary structure, interacts (via C-terminal) with CAMK2A; leading to the phosphorylation and inhibition of DAGLA enzymatic activity. Interacts (via PPXXF motif) with HOMER1 and HOMER2; this interaction is required for DAGLA membrane localization. The cofactor is Ca(2+). Phosphorylated at Ser-784 and Ser-810 by CAMK2A; phosphorylation by CAMK2A inhibits diacylglycerol lipase activity.

The protein localises to the cell membrane. It localises to the cell projection. Its subcellular location is the dendritic spine membrane. It is found in the postsynaptic density membrane. The protein resides in the early endosome membrane. It carries out the reaction a 1,2-diacyl-sn-glycerol + H2O = a 2-acylglycerol + a fatty acid + H(+). The catalysed reaction is 1-octadecanoyl-2-(5Z,8Z,11Z,14Z-eicosatetraenoyl)-sn-glycerol + H2O = 2-(5Z,8Z,11Z,14Z-eicosatetraenoyl)-glycerol + octadecanoate + H(+). The enzyme catalyses 1,2-di-(9Z-octadecenoyl)-sn-glycerol + H2O = 2-(9Z-octadecenoyl)-glycerol + (9Z)-octadecenoate + H(+). It catalyses the reaction 1-(9Z-octadecenoyl)-2-(5Z,8Z,11Z,14Z-eicosatetraenoyl)-sn-glycerol + H2O = 2-(5Z,8Z,11Z,14Z-eicosatetraenoyl)-glycerol + (9Z)-octadecenoate + H(+). It carries out the reaction 1-(9Z-octadecenoyl)-2-octadecanoyl-sn-glycerol + H2O = 2-octadecanoylglycerol + (9Z)-octadecenoate + H(+). The catalysed reaction is 1-(9Z-octadecenoyl)-2-(9Z,12Z-octadecadienoyl)-sn-glycerol + H2O = 2-(9Z,12Z-octadecadienoyl)-glycerol + (9Z)-octadecenoate + H(+). The enzyme catalyses 1-(9Z-octadecenoyl)-2-O-(5Z,8Z,11Z,14Z-eicosatetraenyl)-sn-glycerol + H2O = 2-O-(5Z,8Z,11Z,14Z)-eicosatetraenylglycerol + (9Z)-octadecenoate + H(+). Inhibited by 1,2,3-triazole urea covalent inhibitors KT172, DH376 and DO34. Inhibited by p-hydroxy-mercuri-benzoate and HgCl(2), but not to PMSF. Also inhibited by RHC80267. Diacylglycerol lipase activity is inhibited by the phosphorylation of Ser-784 and Ser-810 by CAMK2A. Serine hydrolase that hydrolyzes arachidonic acid-esterified diacylglycerols (DAGs) to produce the principal endocannabinoid, 2-arachidonoylglycerol (2-AG). Preferentially hydrolyzes sn-1 fatty acids from diacylglycerols (DAG) that contain arachidonic acid (AA) esterified at the sn-2 position to biosynthesize 2-AG. Has negligible activity against other lipids including monoacylglycerols and phospholipids. Plays a key role in regulating 2-AG signaling in the CNS. Controls the activity of 2-AG as a retrograde messenger at neuronal synapses. Supports axonal growth during development and adult neurogenesis. Plays a role for eCB signaling in the physiological regulation of anxiety and depressive behaviors. Also regulates neuroinflammatory responses in the brain, in particular, LPS-induced microglial activation. The protein is Diacylglycerol lipase-alpha (Dagla) of Rattus norvegicus (Rat).